The primary structure comprises 282 residues: MEMO1 family protein Msed_2139 (282 aa).

The protein belongs to the MEMO1 family.

This Metallosphaera sedula (strain ATCC 51363 / DSM 5348 / JCM 9185 / NBRC 15509 / TH2) protein is MEMO1 family protein Msed_2139.